The sequence spans 82 residues: Chaplin-E (82 aa).

Positions 1-27 (MKNLKKAAAVTMVAGGLIAAGAGMASA) are cleaved as a signal peptide. In terms of domain architecture, Chaplin spans 41–81 (SPGVASGNLVQAPIHIPVNAVGNSVNVIGVLNPAFGNLGVN).

Belongs to the chaplin family. Short chaplin subfamily.

The protein resides in the cell surface. Its subcellular location is the secreted. The protein localises to the cell wall. It is found in the fimbrium. One of 8 partially redundant surface-active proteins required for efficient formation of aerial mycelium; the short chaplins assemble into a hydrophobic, amyloidal fibrillar surface layer that envelopes and protects aerial hyphae and spores, presumably anchored to the long chaplins. Chaplins have an overlapping function with the surface-active SapB peptide; chaplins are essential on minimal medium while on rich medium both chaplins and SapB are required for efficient aerial hyphae formation. Chaplins are also involved in cell attachment to a hydrophobic surface. Forms amyloid fibrils in vitro probably composed of stacked beta-sheets, at low extracellular concentrations individually restores the ability to form aerial hyphae to a chaplin-deficient strain, but does so less well than other short chaplins. A small chaplin extract (ChpD, ChpE, ChpF, ChpG and ChpH) self-assembles into 2 different amyloids; small fibrils at the air-water interface form an amphipathic membrane that resembles spore-surface structures involved in aerial hyphae formation, and hydrophilic fibrils in solution that resemble the fibers that attach cells to a hydrophobic surface. At the air-water interface the hydrophilic surface is in contact with water (probably equivalent to the peptidoglycan layer), while the hydrophobic face is exposed to the air, making the surface of the aerial hyphae hydrophobic. A minimal chaplin strain capable of forming aerial mycelium/hyphae on minimal medium contains ChpC, ChpE and ChpH. The strain also has restored rodlet formation on the hyphae surface. A second strain with ChpA, ChpD and ChpE makes slightly less robust hyphae. This essential chaplin may coordinate the assembly and/or polymerization of the other chaplins. A small chaplin extract applied to a chaplin-deficient strain restores aerial hyphae formation. The small chaplin extract forms an amyloid-like structure similar to that seen on the surface of cells without rodlets (rdlA-rdlB deletions), and is highly surface active, reducing surface tension from 72 to 26 mJ/m(2), which probably allows escape of hyphae from an aqueous environment into air. This chain is Chaplin-E, found in Streptomyces coelicolor (strain ATCC BAA-471 / A3(2) / M145).